The sequence spans 634 residues: Kelch-like protein 31 (634 aa).

Alanine 2 carries the post-translational modification N,N,N-trimethylalanine. A BTB domain is found at 73-137; sequence CDLVIGTKTK…AYTGKLTLSL (65 aa). A BACK domain is found at 172-273; the sequence is CMYVVNIAET…SAQDLVNYVQ (102 aa). Kelch repeat units lie at residues 317-365, 366-419, 420-466, 468-513, 515-565, and 567-614; these read VLVT…VMDG, FLYV…VFNG, LVYA…VADG, VLVT…TLSD, VYVM…ALHG, and AYLV…TLSM.

Post-translationally, N-terminus is methylated by METTL11A/NTM1. Strongly expressed in skeletal muscle and weakly in heart. According to PubMed:15302408, not expressed in other tissues. According to PubMed:18719355, abundantly expressed in both embryonic skeletal and heart tissues.

Functionally, transcriptional repressor in MAPK/JNK signaling pathway to regulate cellular functions. Overexpression inhibits the transcriptional activities of both the TPA-response element (TRE) and serum response element (SRE). The protein is Kelch-like protein 31 (KLHL31) of Homo sapiens (Human).